The following is a 189-amino-acid chain: Glycerol-3-phosphate acyltransferase (189 aa).

Helical transmembrane passes span 1–21 (MFWL…AILL), 51–71 (LAIL…LIAS), 77–97 (LQDQ…PLYF), 111–131 (MLLG…LLTF), and 151–171 (LLAW…LLIV).

It belongs to the PlsY family. In terms of assembly, probably interacts with PlsX.

Its subcellular location is the cell inner membrane. It catalyses the reaction an acyl phosphate + sn-glycerol 3-phosphate = a 1-acyl-sn-glycero-3-phosphate + phosphate. It participates in lipid metabolism; phospholipid metabolism. In terms of biological role, catalyzes the transfer of an acyl group from acyl-phosphate (acyl-PO(4)) to glycerol-3-phosphate (G3P) to form lysophosphatidic acid (LPA). This enzyme utilizes acyl-phosphate as fatty acyl donor, but not acyl-CoA or acyl-ACP. The protein is Glycerol-3-phosphate acyltransferase of Pseudomonas fluorescens (strain Pf0-1).